The sequence spans 129 residues: uncharacterized protein (129 aa).

Residue lysine 121 forms an Isoglutamyl lysine isopeptide (Lys-Gln) (interchain with Q-Cter in protein Pup) linkage.

This is an uncharacterized protein from Mycolicibacterium smegmatis (strain ATCC 700084 / mc(2)155) (Mycobacterium smegmatis).